Reading from the N-terminus, the 549-residue chain is Urocanate hydratase (549 aa).

NAD(+) contacts are provided by residues 46-47, Gln-124, 170-172, Glu-190, Arg-195, 236-237, 257-261, 267-268, and Tyr-316; these read GG, GMG, NA, QTSAH, and YV. Cys-404 is a catalytic residue. Residue Gly-486 coordinates NAD(+).

It belongs to the urocanase family. Requires NAD(+) as cofactor.

It localises to the cytoplasm. The catalysed reaction is 4-imidazolone-5-propanoate = trans-urocanate + H2O. The protein operates within amino-acid degradation; L-histidine degradation into L-glutamate; N-formimidoyl-L-glutamate from L-histidine: step 2/3. Functionally, catalyzes the conversion of urocanate to 4-imidazolone-5-propionate. This Natranaerobius thermophilus (strain ATCC BAA-1301 / DSM 18059 / JW/NM-WN-LF) protein is Urocanate hydratase.